We begin with the raw amino-acid sequence, 504 residues long: Maturase K (504 aa).

The protein belongs to the intron maturase 2 family. MatK subfamily.

Its subcellular location is the plastid. It localises to the chloroplast. Usually encoded in the trnK tRNA gene intron. Probably assists in splicing its own and other chloroplast group II introns. The chain is Maturase K from Lepidium campestre (Field pepperwort).